Reading from the N-terminus, the 139-residue chain is 3-hydroxyacyl-[acyl-carrier-protein] dehydratase FabZ (139 aa).

His46 is an active-site residue.

It belongs to the thioester dehydratase family. FabZ subfamily.

The protein resides in the cytoplasm. It catalyses the reaction a (3R)-hydroxyacyl-[ACP] = a (2E)-enoyl-[ACP] + H2O. Its function is as follows. Involved in unsaturated fatty acids biosynthesis. Catalyzes the dehydration of short chain beta-hydroxyacyl-ACPs and long chain saturated and unsaturated beta-hydroxyacyl-ACPs. This chain is 3-hydroxyacyl-[acyl-carrier-protein] dehydratase FabZ, found in Petrotoga mobilis (strain DSM 10674 / SJ95).